A 223-amino-acid polypeptide reads, in one-letter code: Cytidylate kinase (223 aa).

11 to 19 (GPAGVGKST) provides a ligand contact to ATP.

It belongs to the cytidylate kinase family. Type 1 subfamily.

It localises to the cytoplasm. The enzyme catalyses CMP + ATP = CDP + ADP. The catalysed reaction is dCMP + ATP = dCDP + ADP. This is Cytidylate kinase from Maridesulfovibrio salexigens (strain ATCC 14822 / DSM 2638 / NCIMB 8403 / VKM B-1763) (Desulfovibrio salexigens).